The primary structure comprises 697 residues: Polyribonucleotide nucleotidyltransferase (697 aa).

Asp-486 and Asp-492 together coordinate Mg(2+). The 60-residue stretch at 553–612 (PRIHTIKIHPDKIKDVIGKCGSVIRALTEETKTIIDIEDDGTVTVAATDSIKAQQAICRI) folds into the KH domain. The S1 motif domain occupies 622–690 (GSIYHGKVTR…RQGRIRLSMK (69 aa)).

The protein belongs to the polyribonucleotide nucleotidyltransferase family. In terms of assembly, component of the RNA degradosome, which is a multiprotein complex involved in RNA processing and mRNA degradation. Mg(2+) is required as a cofactor.

Its subcellular location is the cytoplasm. It catalyses the reaction RNA(n+1) + phosphate = RNA(n) + a ribonucleoside 5'-diphosphate. Involved in mRNA degradation. Catalyzes the phosphorolysis of single-stranded polyribonucleotides processively in the 3'- to 5'-direction. This is Polyribonucleotide nucleotidyltransferase from Baumannia cicadellinicola subsp. Homalodisca coagulata.